A 147-amino-acid chain; its full sequence is Hemoglobin subunit beta-2 (147 aa).

Residues 3-147 (HWTAEEKAAI…LVDGLSQGYN (145 aa)) form the Globin domain. Heme b-binding residues include histidine 64 and histidine 93.

The protein belongs to the globin family. As to quaternary structure, heterotetramer of two alpha chains and two beta chains. As to expression, red blood cells.

Functionally, involved in oxygen transport from the lung to the various peripheral tissues. In Xenopus laevis (African clawed frog), this protein is Hemoglobin subunit beta-2 (hbb2).